We begin with the raw amino-acid sequence, 503 residues long: Aspartyl/glutamyl-tRNA(Asn/Gln) amidotransferase subunit B (503 aa).

Belongs to the GatB/GatE family. GatB subfamily. In terms of assembly, heterotrimer of A, B and C subunits.

The enzyme catalyses L-glutamyl-tRNA(Gln) + L-glutamine + ATP + H2O = L-glutaminyl-tRNA(Gln) + L-glutamate + ADP + phosphate + H(+). It catalyses the reaction L-aspartyl-tRNA(Asn) + L-glutamine + ATP + H2O = L-asparaginyl-tRNA(Asn) + L-glutamate + ADP + phosphate + 2 H(+). Allows the formation of correctly charged Asn-tRNA(Asn) or Gln-tRNA(Gln) through the transamidation of misacylated Asp-tRNA(Asn) or Glu-tRNA(Gln) in organisms which lack either or both of asparaginyl-tRNA or glutaminyl-tRNA synthetases. The reaction takes place in the presence of glutamine and ATP through an activated phospho-Asp-tRNA(Asn) or phospho-Glu-tRNA(Gln). The polypeptide is Aspartyl/glutamyl-tRNA(Asn/Gln) amidotransferase subunit B (Ruegeria pomeroyi (strain ATCC 700808 / DSM 15171 / DSS-3) (Silicibacter pomeroyi)).